Reading from the N-terminus, the 356-residue chain is Nicotinate-nucleotide--dimethylbenzimidazole phosphoribosyltransferase (356 aa).

Glu317 (proton acceptor) is an active-site residue.

This sequence belongs to the CobT family. As to quaternary structure, homodimer.

The enzyme catalyses 5,6-dimethylbenzimidazole + nicotinate beta-D-ribonucleotide = alpha-ribazole 5'-phosphate + nicotinate + H(+). It functions in the pathway nucleoside biosynthesis; alpha-ribazole biosynthesis; alpha-ribazole from 5,6-dimethylbenzimidazole: step 1/2. Functionally, catalyzes the synthesis of alpha-ribazole-5'-phosphate from nicotinate mononucleotide (NAMN) and 5,6-dimethylbenzimidazole (DMB). The chain is Nicotinate-nucleotide--dimethylbenzimidazole phosphoribosyltransferase from Salmonella paratyphi C (strain RKS4594).